Consider the following 536-residue polypeptide: Apoptosis inhibitor 5 homolog (536 aa).

The tract at residues 462–536 (ITFGEKAAAN…GYRNRRFNKY (75 aa)) is disordered. Positions 472–487 (GKDKDQEPEKKSRPSN) are enriched in basic and acidic residues. Over residues 498–507 (KYSNKVNQSY) the composition is skewed to polar residues. Gly residues predominate over residues 516 to 528 (RGGGGGGGSGGGY).

It belongs to the API5 family.

The protein resides in the nucleus. Functionally, antiapoptotic factor. Also known to efficiently suppress E2F1-induced apoptosis. The polypeptide is Apoptosis inhibitor 5 homolog (Drosophila melanogaster (Fruit fly)).